A 1559-amino-acid chain; its full sequence is Arginine-glutamic acid dipeptide repeats protein (1559 aa).

Residues 1–36 show a composition bias toward basic and acidic residues; it reads MTADKDKDKDKEKDRDRDRDRERDKRDKARESENAR. Positions 1–89 are disordered; that stretch reads MTADKDKDKD…KKKSRYERTD (89 aa). Serine 53 and serine 56 each carry phosphoserine. Residues 73-84 show a composition bias toward basic residues; it reads KSRKKPPKKKSR. The region spanning 102 to 282 is the BAH domain; it reads VVYRPGDCVY…PETRRLNSTQ (181 aa). Threonine 119 bears the Phosphothreonine mark. Phosphoserine is present on residues serine 141 and serine 303. Positions 283–386 constitute an ELM2 domain; it reads GEIRVGPSHQ…KALQRLVKKP (104 aa). One can recognise an SANT domain in the interval 390–442; sequence LIEKCWTEDEVKRFVKGLRQYGKNFFRIRKELLPNKETGELITFYYYWKKTPE. Positions 463–494 are disordered; sequence TRTASTPVNTPSRPPSSEFLDLSSASEDDFDS. The span at 464-473 shows a compositional bias: polar residues; that stretch reads RTASTPVNTP. The span at 478–487 shows a compositional bias: low complexity; sequence SSEFLDLSSA. The GATA-type zinc-finger motif lies at 507–532; the sequence is RHCFTTTSKDWHHGGRENILLCTDCR. The interval 541 to 1125 is disordered; the sequence is LPPIEKPVDP…PSHASQSARF (585 aa). Lysine 559 participates in a covalent cross-link: Glycyl lysine isopeptide (Lys-Gly) (interchain with G-Cter in SUMO2). Residues serine 593, serine 599, and serine 612 each carry the phosphoserine modification. A compositionally biased stretch (low complexity) spans 608 to 622; it reads SGRNSPSAASTSSND. A compositionally biased stretch (basic and acidic residues) spans 623–639; it reads SKAEAVKKSAKKVKEEA. Lysine 636 is covalently cross-linked (Glycyl lysine isopeptide (Lys-Gly) (interchain with G-Cter in SUMO2)). 4 positions are modified to phosphoserine: serine 641, serine 655, serine 674, and serine 678. Basic and acidic residues predominate over residues 651 to 672; the sequence is EKVASDTEDTDRATSKKTKTQE. Over residues 687-707 the composition is skewed to basic and acidic residues; the sequence is SDSRSVNDEGSSDPKDIDQDN. A compositionally biased stretch (polar residues) spans 708–735; it reads RSTSPSIPSPQDNESDSDSSAQQQMLQT. Residues 736–761 show a composition bias toward low complexity; sequence QPPALQAPSGAASAPSTAPPGTTQLP. Over residues 768–791 the composition is skewed to polar residues; the sequence is SATTVPPQGSPATSQPPNQTQSTV. Over residues 805–822 the composition is skewed to pro residues; it reads LHPPRLPSPHPPLQPMTA. Positions 890–900 are enriched in low complexity; that stretch reads QLPASQSALQP. The span at 901 to 931 shows a compositional bias: pro residues; sequence QQPPREQPLPPAPLAMPHIKPPPTTPIPQLP. Residues 961 to 971 are compositionally biased toward low complexity; it reads KPLSSLSTHHP. Over residues 1027-1053 the composition is skewed to pro residues; the sequence is PQHPFVPGGPPPITPPSCPPTSTPPAG. The span at 1054–1068 shows a compositional bias: low complexity; sequence PSSSSQPPCSAAVSS. Phosphoserine occurs at positions 1098, 1105, and 1107. A compositionally biased stretch (pro residues) spans 1098–1109; the sequence is SPPPPPRSPSPE. Position 1111 is a phosphothreonine (threonine 1111). Residues 1148 to 1205 adopt a coiled-coil conformation; that stretch reads GSKLAKKREEAIEKAKREAEQKAREEREREKEKEKEREREREREREAERAAQKASSSA. Residue lysine 1150 is modified to N6-acetyllysine. The segment covering 1154 to 1198 has biased composition (basic and acidic residues); the sequence is KREEAIEKAKREAEQKAREEREREKEKEKEREREREREREAERAA. The interval 1154–1239 is disordered; it reads KREEAIEKAK…TTIAAVPPYI (86 aa). Tyrosine 1252 is modified (phosphotyrosine). Serine 1259 bears the Phosphoserine mark.

Interacts with HDAC1 and ATN1. Interaction with ATN1 is improved when the poly-Gln region of ATN1 is extended. As to expression, widely expressed.

It localises to the nucleus. It is found in the PML body. Its function is as follows. Plays a role as a transcriptional repressor during development. May play a role in the control of cell survival. Interacts with FAT1. The chain is Arginine-glutamic acid dipeptide repeats protein (Rere) from Rattus norvegicus (Rat).